Consider the following 436-residue polypeptide: tRNA modification GTPase MnmE (436 aa).

(6S)-5-formyl-5,6,7,8-tetrahydrofolate contacts are provided by arginine 20, glutamate 77, and lysine 117. Residues 214 to 360 (GLKIVIAGAP…FIKELESFCL (147 aa)) form the TrmE-type G domain. GTP contacts are provided by residues 224 to 229 (NSGKSS), 243 to 249 (MEEAGTT), and 268 to 271 (DTAG). Mg(2+) contacts are provided by serine 228 and threonine 249. Lysine 436 contributes to the (6S)-5-formyl-5,6,7,8-tetrahydrofolate binding site.

This sequence belongs to the TRAFAC class TrmE-Era-EngA-EngB-Septin-like GTPase superfamily. TrmE GTPase family. As to quaternary structure, homodimer. Heterotetramer of two MnmE and two MnmG subunits. The cofactor is K(+).

It localises to the cytoplasm. Exhibits a very high intrinsic GTPase hydrolysis rate. Involved in the addition of a carboxymethylaminomethyl (cmnm) group at the wobble position (U34) of certain tRNAs, forming tRNA-cmnm(5)s(2)U34. In Bartonella quintana (strain Toulouse) (Rochalimaea quintana), this protein is tRNA modification GTPase MnmE.